We begin with the raw amino-acid sequence, 189 residues long: Protein shisa-like-2A (189 aa).

The next 2 helical transmembrane spans lie at 48 to 68 and 70 to 90; these read SFFP…LVGL and TAAV…YLFI. Residues 98–189 are disordered; sequence LDPGLSLQTT…PTPGPHGPVP (92 aa). The segment covering 140–171 has biased composition (polar residues); sequence NTHLESNKKQTVSPTCLPQNQFMATVTASNIP.

It belongs to the shisa family.

It localises to the membrane. The protein is Protein shisa-like-2A (Shisal2a) of Mus musculus (Mouse).